Consider the following 512-residue polypeptide: MENTNLRTKTLRDGTTAEELFSQDGLSFNDFIILPGFIDFDSSKVNVSGQFTKNILLHLPLVSSPMDTVTESSMARAMALMGGIGVIHNNCTVEQQARMVRSVKLYRNGFIMKPKSVSPDVPVSTIRNIKSEKGISGILVTEGGKYDGKLLGIVCTKDIDFVKDASAPVSQYMTRRENMTVERYPIKLEEAMDVLNRSRHGYLPVLNDKDEVVCLCSRRDAVRARDYPNSSLDRNGHLLCAAATSTREADKGRVAALSEAGIDVLVLDSSQGNTIYQVSFIRWVKKTYPHLEVVAGNVVTQDQAKNLIDAGADSLRIGMGSGSICITQEVLACGRPQATAIYKVARYAASRGVPCVADGGLRNVGDVCKALAVGANVAMLGSMIAGTSETPGEYFFKDGMRLKGYRGMGSIDAMLQGRESGKRYLSENETLQVAQGVAGAVLDKGSVLKLLAYIHKGLQQSAQDIGEVSFDAIREKVYEGQVLFNRRTLTAQSEGAVHSLHHYERKLFASKL.

2 consecutive CBS domains span residues 110–169 (FIMK…SAPV) and 173–231 (MTRR…PNSS). Residues 268–270 (DSS) and 318–320 (GMG) each bind NAD(+). K(+) contacts are provided by glycine 320 and glycine 322. Serine 323 lines the IMP pocket. K(+) is bound at residue cysteine 325. Residue cysteine 325 is the Thioimidate intermediate of the active site. IMP contacts are provided by residues 358-360 (DGG), 381-382 (GS), and 405-409 (YRGMG). Arginine 423 (proton acceptor) is an active-site residue. Residue glutamine 435 coordinates IMP. Residues glutamate 494 and glycine 495 each contribute to the K(+) site. The short motif at 510 to 512 (SKL) is the Microbody targeting signal element.

It belongs to the IMPDH/GMPR family. As to quaternary structure, homotetramer. The cofactor is K(+).

The protein localises to the glycosome. The catalysed reaction is IMP + NAD(+) + H2O = XMP + NADH + H(+). Its pathway is purine metabolism; XMP biosynthesis via de novo pathway; XMP from IMP: step 1/1. Mycophenolic acid (MPA) is a non-competitive inhibitor that prevents formation of the closed enzyme conformation by binding to the same site as the amobile flap. In contrast, mizoribine monophosphate (MZP) is a competitive inhibitor that induces the closed conformation. MPA is a potent inhibitor of mammalian IMPDHs but a poor inhibitor of the bacterial enzymes. MZP is a more potent inhibitor of bacterial IMPDH. In terms of biological role, catalyzes the conversion of inosine 5'-phosphate (IMP) to xanthosine 5'-phosphate (XMP), the first committed and rate-limiting step in the de novo synthesis of guanine nucleotides, and therefore plays an important role in the regulation of cell growth. The chain is Inosine-5'-monophosphate dehydrogenase from Trypanosoma brucei brucei.